A 110-amino-acid polypeptide reads, in one-letter code: Small ribosomal subunit protein bS16 (110 aa).

Residues 81–104 show a composition bias toward basic and acidic residues; that stretch reads VRPAEVLGKQKQEKERSAKKKDAA. Residues 81–110 are disordered; it reads VRPAEVLGKQKQEKERSAKKKDAAASETSE.

Belongs to the bacterial ribosomal protein bS16 family.

This is Small ribosomal subunit protein bS16 from Prochlorococcus marinus (strain NATL2A).